The sequence spans 791 residues: Phenylalanine--tRNA ligase beta subunit (791 aa).

The tRNA-binding domain maps to 39 to 147 (GDALGQVVVA…DDAPVGQALA (109 aa)). The B5 domain occupies 400–475 (PQPASILLRR…RIHGYDRVPT (76 aa)). Mg(2+)-binding residues include Asp453, Asp459, Glu462, and Glu463. Positions 697-790 (SRYPSMRRDL…IEREHRARIR (94 aa)) constitute an FDX-ACB domain.

The protein belongs to the phenylalanyl-tRNA synthetase beta subunit family. Type 1 subfamily. In terms of assembly, tetramer of two alpha and two beta subunits. Mg(2+) serves as cofactor.

The protein resides in the cytoplasm. The catalysed reaction is tRNA(Phe) + L-phenylalanine + ATP = L-phenylalanyl-tRNA(Phe) + AMP + diphosphate + H(+). The chain is Phenylalanine--tRNA ligase beta subunit from Xanthomonas campestris pv. campestris (strain 8004).